Here is a 354-residue protein sequence, read N- to C-terminus: Threonine synthase (354 aa).

Lysine 61 carries the N6-(pyridoxal phosphate)lysine modification. Residues asparagine 87, 187–191 (GNAGN), and threonine 316 each bind pyridoxal 5'-phosphate.

This sequence belongs to the threonine synthase family. It depends on pyridoxal 5'-phosphate as a cofactor.

It carries out the reaction O-phospho-L-homoserine + H2O = L-threonine + phosphate. It participates in amino-acid biosynthesis; L-threonine biosynthesis; L-threonine from L-aspartate: step 5/5. Catalyzes the gamma-elimination of phosphate from L-phosphohomoserine and the beta-addition of water to produce L-threonine. The polypeptide is Threonine synthase (thrC) (Halalkalibacterium halodurans (strain ATCC BAA-125 / DSM 18197 / FERM 7344 / JCM 9153 / C-125) (Bacillus halodurans)).